A 134-amino-acid polypeptide reads, in one-letter code: Complexin-2 (134 aa).

Residues 1–114 (MDFVMKQALG…CGDEDEEDEE (114 aa)) are disordered. Over residues 15–85 (DMGKMLGGDE…EEKEAEEKAA (71 aa)) the composition is skewed to basic and acidic residues. The stretch at 29-84 (DAQKKEEERQEALRQQEDERKQKHIRMETEREKVRQQIRDKYGLKKKEEKEAEEKA) forms a coiled coil.

The protein belongs to the complexin/synaphin family. Binds to the SNARE core complex containing SNAP25, VAMP2 and STX1A. As to expression, nervous system. Present in electric organ (at protein level).

It localises to the cytoplasm. The protein localises to the cytosol. Its subcellular location is the presynapse. It is found in the nucleus. The protein resides in the perikaryon. Its function is as follows. Positively regulates a late step in synaptic vesicle exocytosis. In Narke japonica (Japanese sleeper ray), this protein is Complexin-2.